A 202-amino-acid polypeptide reads, in one-letter code: Small ribosomal subunit protein uS4 (202 aa).

The tract at residues 16-43 is disordered; the sequence is GELPGLSRKTPRRAYPPGQHGQGRRKRS. Residues 90–152 form the S4 RNA-binding domain; that stretch reads MRLDNTVFRL…DNSRRMVETN (63 aa).

This sequence belongs to the universal ribosomal protein uS4 family. In terms of assembly, part of the 30S ribosomal subunit. Contacts protein S5. The interaction surface between S4 and S5 is involved in control of translational fidelity.

Functionally, one of the primary rRNA binding proteins, it binds directly to 16S rRNA where it nucleates assembly of the body of the 30S subunit. Its function is as follows. With S5 and S12 plays an important role in translational accuracy. This is Small ribosomal subunit protein uS4 from Crocosphaera subtropica (strain ATCC 51142 / BH68) (Cyanothece sp. (strain ATCC 51142)).